We begin with the raw amino-acid sequence, 106 residues long: Biogenesis of lysosome-related organelles complex 1 subunit BLS1 (106 aa).

It belongs to the BLOC1S1 family. In terms of assembly, component of the biogenesis of lysosome-related organelles complex-1 (BLOC-1).

It is found in the endosome. Its function is as follows. Component of the biogenesis of lysosome-related organelles complex-1 (BLOC-1), a complex involved in endosomal cargo sorting. In Candida glabrata (strain ATCC 2001 / BCRC 20586 / JCM 3761 / NBRC 0622 / NRRL Y-65 / CBS 138) (Yeast), this protein is Biogenesis of lysosome-related organelles complex 1 subunit BLS1 (BLS1).